A 303-amino-acid polypeptide reads, in one-letter code: Aspartate carbamoyltransferase catalytic subunit (303 aa).

Carbamoyl phosphate contacts are provided by Arg-49 and Thr-50. L-aspartate is bound at residue Lys-77. 3 residues coordinate carbamoyl phosphate: Arg-99, His-126, and Gln-129. Arg-159 and Arg-211 together coordinate L-aspartate. Carbamoyl phosphate-binding residues include Ser-252 and Pro-253.

The protein belongs to the aspartate/ornithine carbamoyltransferase superfamily. ATCase family. As to quaternary structure, heterododecamer (2C3:3R2) of six catalytic PyrB chains organized as two trimers (C3), and six regulatory PyrI chains organized as three dimers (R2).

It carries out the reaction carbamoyl phosphate + L-aspartate = N-carbamoyl-L-aspartate + phosphate + H(+). The protein operates within pyrimidine metabolism; UMP biosynthesis via de novo pathway; (S)-dihydroorotate from bicarbonate: step 2/3. Functionally, catalyzes the condensation of carbamoyl phosphate and aspartate to form carbamoyl aspartate and inorganic phosphate, the committed step in the de novo pyrimidine nucleotide biosynthesis pathway. The protein is Aspartate carbamoyltransferase catalytic subunit of Listeria monocytogenes serovar 1/2a (strain ATCC BAA-679 / EGD-e).